The following is a 562-amino-acid chain: Protein wntless (562 aa).

Topologically, residues 1 to 13 (MSGTILENLSGRK) are cytoplasmic. Residues 14 to 34 (LSILVATLLLCQVLCFLLGGL) form a helical membrane-spanning segment. Residues 35 to 239 (YAPLPAGHVT…AIHQNGGFTQ (205 aa)) are Lumenal-facing. N-linked (GlcNAc...) asparagine glycosylation is present at Asn58. Residues 240-260 (IWLLLKTMLFPFVVGIMIWFW) form a helical membrane-spanning segment. Topologically, residues 261 to 270 (RRVHLLQRSP) are cytoplasmic. A helical membrane pass occupies residues 271 to 291 (ALLEYMLIYLGAALTFLNLPL). Residues 292–311 (EYLSLVYEMPYMLLLSDIRQ) lie on the Lumenal side of the membrane. Residues 312-332 (GIFYAMLLTFWLVFAGEHMLI) traverse the membrane as a helical segment. Residues 333–344 (QDAPNKSTIRSR) lie on the Cytoplasmic side of the membrane. The chain crosses the membrane as a helical span at residues 345-365 (YWKHLSAVVVGCISLFVFDIC). Residues 366–390 (ERGVQLRNPFYSIWTTPLGAKVAMT) are Lumenal-facing. Residues 391 to 411 (FIVLAGVSAAIYFLFLCYMIW) form a helical membrane-spanning segment. Residues 412–441 (KVFRNIGDKRTSLPSMSQARRLHYEGLIYR) lie on the Cytoplasmic side of the membrane. The chain crosses the membrane as a helical span at residues 442–462 (FKFLMLATLVCAALTVAGFIM). The Lumenal portion of the chain corresponds to 463 to 482 (GQMAEGQWDWNDNVAIQPTS). A helical transmembrane segment spans residues 483 to 503 (AFLTGVYGMWNIYIFALLILY). Topologically, residues 504 to 562 (APSHKQWPAMHHSDETTQSNENIVASAASEEIEFSHLPSDSNPSEISSLTSFTRKVAFD) are cytoplasmic.

It belongs to the wntless family. As to quaternary structure, interacts with wg; in the Golgi. Interacts with Vps35, a component of the retromer complex; wls stability is regulated by Vps35.

The protein resides in the presynaptic cell membrane. It localises to the postsynaptic cell membrane. It is found in the cell membrane. Its subcellular location is the endoplasmic reticulum membrane. The protein localises to the endosome membrane. The protein resides in the golgi apparatus membrane. In terms of biological role, a segment polarity gene required for wingless (wg)-dependent patterning processes, acting in both wg-sending cells and wg-target cells. In non-neuronal cells wls directs wg secretion. The wls traffic loop encompasses the Golgi, the cell surface, an endocytic compartment and a retrograde route leading back to the Golgi, and involves clathrin-mediated endocytosis and the retromer complex (a conserved protein complex consisting of Vps35 and Vps26). In neuronal cells (the larval motorneuron NMJ), the wg signal moves across the synapse via the release of wls-containing exosome-like vesicles. Postsynaptic wls is required for the trafficking of fz2 through the fz2-interacting protein Grip. The chain is Protein wntless from Drosophila sechellia (Fruit fly).